The primary structure comprises 309 residues: Aromatic prenyltransferase (309 aa).

It belongs to the aromatic prenyltransferase family.

Prenyltransferase that attaches isoprenoid moieties to carbon atoms of aromatic substrates in an enzyme-catalyzed Friedel-Crafts reaction. Shows specificity for dimethylallyl diphosphate (DMAPP) and does not accept geranyl diphosphate (GPP) or isopentenyl diphosphate (IPP). Prenylates the artificial substrate 2,7-dihydroxynaphthalene (2,7-DHN), as well as dihydrophenazine-1-carboxylic acid and 4-hydroxybenzoic acid at lower levels. Only traces of products are detected with aspulvinone E or flaviolin as substrates; and no product is formed with L-tryptophan, L-tyrosine, or 4-hydroxyphenylpyruvate. Ptf seems no to be involved in the prenylation reaction in the biosynthesis of aspulvinone H and J and the physiological function of ptf remains unknown. This chain is Aromatic prenyltransferase, found in Botryotinia fuckeliana (strain B05.10) (Noble rot fungus).